Here is a 213-residue protein sequence, read N- to C-terminus: Imidazole glycerol phosphate synthase subunit HisH 1 (213 aa).

In terms of domain architecture, Glutamine amidotransferase type-1 spans Ser-3 to Ile-213. The active-site Nucleophile is the Cys-81. Active-site residues include His-195 and Glu-197.

Heterodimer of HisH and HisF.

The protein resides in the cytoplasm. The catalysed reaction is 5-[(5-phospho-1-deoxy-D-ribulos-1-ylimino)methylamino]-1-(5-phospho-beta-D-ribosyl)imidazole-4-carboxamide + L-glutamine = D-erythro-1-(imidazol-4-yl)glycerol 3-phosphate + 5-amino-1-(5-phospho-beta-D-ribosyl)imidazole-4-carboxamide + L-glutamate + H(+). The enzyme catalyses L-glutamine + H2O = L-glutamate + NH4(+). The protein operates within amino-acid biosynthesis; L-histidine biosynthesis; L-histidine from 5-phospho-alpha-D-ribose 1-diphosphate: step 5/9. Its function is as follows. IGPS catalyzes the conversion of PRFAR and glutamine to IGP, AICAR and glutamate. The HisH subunit provides the glutamine amidotransferase activity that produces the ammonia necessary to HisF for the synthesis of IGP and AICAR. The sequence is that of Imidazole glycerol phosphate synthase subunit HisH 1 from Legionella pneumophila (strain Paris).